The following is a 440-amino-acid chain: Histidinol dehydrogenase homolog 2 (440 aa).

Histidine 265 contacts Zn(2+). Active-site proton acceptor residues include glutamate 333 and histidine 334. Residue histidine 426 participates in Zn(2+) binding.

It belongs to the histidinol dehydrogenase family. The cofactor is Zn(2+).

This Mesorhizobium japonicum (strain LMG 29417 / CECT 9101 / MAFF 303099) (Mesorhizobium loti (strain MAFF 303099)) protein is Histidinol dehydrogenase homolog 2.